The sequence spans 219 residues: MAGPDDQHLSGMRVEYGSVEKDGSPDLDTDWLYDGWLTLFCKWIDDAERAGVAEPNAMVLATVANGRPVSRSVLCKGADEAGIIFFTNYDSDKGDDLAATPYASVTFPWYQLGRQVHIRGPVSTVDPQVSEDYWSKRPRGSQLGAWASHQSRPIASRTALLDQLLEVTVRFADSELIPLPPNWGGYLIVPEVVEFWQGRENRVHNRIRVTGGCIERLQP.

Substrate is bound by residues Arg-13–Tyr-16 and Lys-76. Residues Arg-71–Lys-76, Phe-86–Thr-87, Lys-93, and Gln-115 contribute to the FMN site. Substrate contacts are provided by Tyr-133, Arg-137, and Ser-141. FMN-binding positions include Gln-150–Ser-151 and Trp-196. Arg-202–His-204 is a substrate binding site. Arg-206 is a binding site for FMN.

It belongs to the pyridoxamine 5'-phosphate oxidase family. Homodimer. FMN serves as cofactor.

The enzyme catalyses pyridoxamine 5'-phosphate + O2 + H2O = pyridoxal 5'-phosphate + H2O2 + NH4(+). The catalysed reaction is pyridoxine 5'-phosphate + O2 = pyridoxal 5'-phosphate + H2O2. It functions in the pathway cofactor metabolism; pyridoxal 5'-phosphate salvage; pyridoxal 5'-phosphate from pyridoxamine 5'-phosphate: step 1/1. It participates in cofactor metabolism; pyridoxal 5'-phosphate salvage; pyridoxal 5'-phosphate from pyridoxine 5'-phosphate: step 1/1. Functionally, catalyzes the oxidation of either pyridoxine 5'-phosphate (PNP) or pyridoxamine 5'-phosphate (PMP) into pyridoxal 5'-phosphate (PLP). This is Pyridoxine/pyridoxamine 5'-phosphate oxidase from Mycobacterium leprae (strain TN).